We begin with the raw amino-acid sequence, 239 residues long: Ribonuclease PH (239 aa).

Phosphate contacts are provided by residues arginine 87 and 125–127 (GTR).

The protein belongs to the RNase PH family. In terms of assembly, homohexameric ring arranged as a trimer of dimers.

The catalysed reaction is tRNA(n+1) + phosphate = tRNA(n) + a ribonucleoside 5'-diphosphate. Functionally, phosphorolytic 3'-5' exoribonuclease that plays an important role in tRNA 3'-end maturation. Removes nucleotide residues following the 3'-CCA terminus of tRNAs; can also add nucleotides to the ends of RNA molecules by using nucleoside diphosphates as substrates, but this may not be physiologically important. Probably plays a role in initiation of 16S rRNA degradation (leading to ribosome degradation) during starvation. This Pseudomonas paraeruginosa (strain DSM 24068 / PA7) (Pseudomonas aeruginosa (strain PA7)) protein is Ribonuclease PH.